The primary structure comprises 320 residues: Heterogeneous nuclear ribonucleoprotein A1 (320 aa).

Met-1 is subject to N-acetylmethionine. Ser-2 carries the N-acetylserine; in Heterogeneous nuclear ribonucleoprotein A1, N-terminally processed modification. Residue Ser-2 is modified to Phosphoserine. N6-acetyllysine; alternate is present on Lys-3. Lys-3 participates in a covalent cross-link: Glycyl lysine isopeptide (Lys-Gly) (interchain with G-Cter in SUMO2); alternate. Phosphoserine is present on residues Ser-4 and Ser-6. The tract at residues 4–94 is globular A domain; it reads SESPKEPEQL…EPKRAVSRED (91 aa). Residue Lys-8 forms a Glycyl lysine isopeptide (Lys-Gly) (interchain with G-Cter in SUMO2) linkage. RRM domains lie at 14–97 and 105–184; these read RKLF…DSQR and KKIF…LSKQ. Position 22 is a phosphoserine (Ser-22). Residue Lys-78 forms a Glycyl lysine isopeptide (Lys-Gly) (interchain with G-Cter in SUMO2) linkage. Residues 95–185 form a globular B domain region; sequence SQRPGAHLTV…EVRKALSKQE (91 aa). Lys-113 is covalently cross-linked (Glycyl lysine isopeptide (Lys-Gly) (interchain with G-Cter in SUMO)). Residues Lys-179 and Lys-183 each participate in a glycyl lysine isopeptide (Lys-Gly) (interchain with G-Cter in SUMO2) cross-link. The segment at 182 to 216 is disordered; sequence SKQEMASASSSQRGRSGSGNFGGGRGGGFGGNDNF. Position 192 is a phosphoserine; by MKNK2 (Ser-192). Arg-194 carries the asymmetric dimethylarginine; alternate modification. Arg-194 is subject to Dimethylated arginine; alternate. Position 194 is an omega-N-methylarginine; alternate (Arg-194). A compositionally biased stretch (gly residues) spans 197–216; the sequence is SGSGNFGGGRGGGFGGNDNF. Ser-199 is subject to Phosphoserine. Residues Arg-206, Arg-218, Arg-225, and Arg-232 each carry the asymmetric dimethylarginine; alternate modification. Arg-206 is subject to Dimethylated arginine; alternate. An omega-N-methylarginine; alternate mark is found at Arg-206, Arg-218, Arg-225, and Arg-232. An RNA-binding RGG-box region spans residues 218–240; it reads RGGNFSGRGGFGGSRGGGGYGGS. Arg-225 is subject to Dimethylated arginine; alternate. The segment at 268–305 is nuclear targeting sequence; that stretch reads NQSSNFGPMKGGNFGGRSSGPYGGGGQYFAKPRNQGGY. The segment at 274 to 320 is disordered; sequence GPMKGGNFGGRSSGPYGGGGQYFAKPRNQGGYGGSSSSSSYGSGRRF. Residues 276-294 are compositionally biased toward gly residues; it reads MKGGNFGGRSSGPYGGGGQ. Omega-N-methylarginine is present on Arg-284. Position 285 is a phosphoserine (Ser-285). The residue at position 298 (Lys-298) is an N6-acetyllysine; alternate. Lys-298 is covalently cross-linked (Glycyl lysine isopeptide (Lys-Gly) (interchain with G-Cter in SUMO2); alternate). The residue at position 300 (Arg-300) is an Omega-N-methylarginine. Residues 308-320 are compositionally biased toward low complexity; that stretch reads SSSSSSYGSGRRF. The residue at position 309 (Ser-309) is a Phosphoserine. 3 positions are modified to phosphoserine; by MKNK2: Ser-310, Ser-311, and Ser-312. Ser-313 and Ser-316 each carry phosphoserine. Position 318 is an omega-N-methylarginine (Arg-318).

As to quaternary structure, identified in the spliceosome C complex. Identified in a IGF2BP1-dependent mRNP granule complex containing untranslated mRNAs. Interacts with SEPT6. Interacts with C9orf72. Interacts with KHDRBS1. Interacts with UBQLN2. Interacts with PPIA/CYPA. Post-translationally, sumoylated.

It is found in the nucleus. The protein resides in the cytoplasm. In terms of biological role, involved in the packaging of pre-mRNA into hnRNP particles, transport of poly(A) mRNA from the nucleus to the cytoplasm and modulation of splice site selection. Plays a role in the splicing of pyruvate kinase PKM by binding repressively to sequences flanking PKM exon 9, inhibiting exon 9 inclusion and resulting in exon 10 inclusion and production of the PKM M2 isoform. Binds to the IRES and thereby inhibits the translation of the apoptosis protease activating factor APAF1. May bind to specific miRNA hairpins. The sequence is that of Heterogeneous nuclear ribonucleoprotein A1 (Hnrnpa1) from Mus musculus (Mouse).